A 243-amino-acid chain; its full sequence is Ribosomal RNA small subunit methyltransferase G (243 aa).

S-adenosyl-L-methionine contacts are provided by residues Gly97, Leu102, 148 to 149 (VE), and Arg161.

Belongs to the methyltransferase superfamily. RNA methyltransferase RsmG family.

It is found in the cytoplasm. It catalyses the reaction guanosine(527) in 16S rRNA + S-adenosyl-L-methionine = N(7)-methylguanosine(527) in 16S rRNA + S-adenosyl-L-homocysteine. Its function is as follows. Specifically methylates the N7 position of guanine in position 527 of 16S rRNA. This is Ribosomal RNA small subunit methyltransferase G from Paracidovorax citrulli (strain AAC00-1) (Acidovorax citrulli).